The chain runs to 233 residues: MIDENHPMRAAGNFFGRRHGKPLRPHQSNLFEDLLPRLKLDLATPAPQDLRSLFEAPVETVRMEIGFGGGEHLHHESGRYPQSGFIGVEPFINGMAKMLAALDQAPRPNLRLYDEDATAVLDWLPDASLAGIDLFYPDPWHKRRHWKRRFVSDANLDRFARVLKPGAKFRFASDIEHYVNWTLQHCRRHAAFDWQAESPADWNDAYEGWPGTRYEAKAFREGRRAAYLTFIRR.

The interval 1–22 (MIDENHPMRAAGNFFGRRHGKP) is disordered. 4 residues coordinate S-adenosyl-L-methionine: E64, E89, D116, and D138. Residue D138 is part of the active site. Substrate contacts are provided by residues K142, D174, and 212 to 215 (TRYE).

The protein belongs to the class I-like SAM-binding methyltransferase superfamily. TrmB family.

It carries out the reaction guanosine(46) in tRNA + S-adenosyl-L-methionine = N(7)-methylguanosine(46) in tRNA + S-adenosyl-L-homocysteine. It functions in the pathway tRNA modification; N(7)-methylguanine-tRNA biosynthesis. Catalyzes the formation of N(7)-methylguanine at position 46 (m7G46) in tRNA. The protein is tRNA (guanine-N(7)-)-methyltransferase of Brucella melitensis biotype 1 (strain ATCC 23456 / CCUG 17765 / NCTC 10094 / 16M).